The sequence spans 355 residues: Poly(3-hydroxyalkanoate) polymerase subunit PhaC (355 aa).

One can recognise an AB hydrolase-1 domain in the interval 68-333 (PLLIVYALVN…LAFPGGHIGI (266 aa)). Cysteine 148 is a catalytic residue.

The protein belongs to the PHA/PHB synthase family. Type III PhaC subfamily. In terms of assembly, forms a heterodimer with PhaE, which may multimerize in the presence of 3-hydroxybutyryl-CoA.

It localises to the cytoplasm. The enzyme catalyses (3R)-3-hydroxybutanoyl-CoA + [(3R)-hydroxybutanoate](n) = [(3R)-hydroxybutanoate](n+1) + CoA. It participates in biopolymer metabolism; poly-(R)-3-hydroxybutanoate biosynthesis. Functionally, polymerizes D(-)-3-hydroxybutyryl-CoA to create PHB which consists of thousands of hydroxybutyrate molecules linked end to end. PHB serves as an intracellular energy reserve material when cells grow under conditions of nutrient limitation. This Thiocystis violacea protein is Poly(3-hydroxyalkanoate) polymerase subunit PhaC.